Reading from the N-terminus, the 463-residue chain is HEPACAM family member 2 (463 aa).

Residues 1–32 form the signal peptide; sequence MGQDAFMELLRSMVGLSLCKIHLLLIAGSCLG. N-linked (GlcNAc...) asparagine glycosylation is found at Asn86, Asn130, and Asn166. Ig-like C2-type domains follow at residues 150–234 and 236–332; these read PMVQ…SDII and PTIY…TRFT. Intrachain disulfides connect Cys171-Cys220 and Cys271-Cys316. Asn321 is a glycosylation site (N-linked (GlcNAc...) asparagine). Residues 353 to 373 form a helical membrane-spanning segment; it reads LASITGISLFLIISMCLLFLW. Over 374–463 the chain is Cytoplasmic; that stretch reads KKYQPYKAIR…IPEQQQENTE (90 aa).

Poly-ADP-ribosylated (PARsylated) by tankyrase TNKS during late G2 and prophase, leading to translocation to mitotic centrosomes. In terms of processing, N-glycosylated.

The protein localises to the golgi apparatus membrane. It localises to the cytoplasm. The protein resides in the cytoskeleton. Its subcellular location is the spindle. It is found in the microtubule organizing center. The protein localises to the centrosome. It localises to the midbody. Required during prometaphase for centrosome maturation. Following poly-ADP-ribosylation (PARsylation) by TNKS, translocates from the Golgi apparatus to mitotic centrosomes and plays a key role in the formation of robust microtubules for prompt movement of chromosomes: anchors AKAP9/CG-NAP, a scaffold protein of the gamma-tubulin ring complex and promotes centrosome maturation. This is HEPACAM family member 2 (Hepacam2) from Mus musculus (Mouse).